A 121-amino-acid chain; its full sequence is Cell division protein FtsB (121 aa).

Over 1 to 6 (MRNWRW) the chain is Cytoplasmic. Residues 7 to 24 (LLLVLAVLLAWLQYRFWF) form a helical membrane-spanning segment. Topologically, residues 25-121 (GPGNSGEVMM…AASADPVDHP (97 aa)) are periplasmic. The stretch at 31 to 66 (EVMMLEAQVAHQTRDNEGLRQRNQALAAEVKDLKDG) forms a coiled coil. The tract at residues 98-121 (PPAAQEAAPPAQPPAASADPVDHP) is disordered.

It belongs to the FtsB family. In terms of assembly, part of a complex composed of FtsB, FtsL and FtsQ.

Its subcellular location is the cell inner membrane. In terms of biological role, essential cell division protein. May link together the upstream cell division proteins, which are predominantly cytoplasmic, with the downstream cell division proteins, which are predominantly periplasmic. The chain is Cell division protein FtsB from Xanthomonas campestris pv. campestris (strain 8004).